We begin with the raw amino-acid sequence, 564 residues long: Septation ring formation regulator EzrA (564 aa).

Residues 1-2 lie on the Extracellular side of the membrane; it reads MV. The helical transmembrane segment at 3–21 threads the bilayer; it reads FVISVILAIIVILTIGLIL. Residues 22–564 are Cytoplasmic-facing; sequence RKRIYDKVDH…IEENQLTLNR (543 aa). Coiled-coil stretches lie at residues 101-140, 168-215, 251-436, and 468-537; these read ANNI…REEV, FDKK…MEQF, GFDK…KKSN, and DIAK…ELSL.

This sequence belongs to the EzrA family.

The protein localises to the cell membrane. Negative regulator of FtsZ ring formation; modulates the frequency and position of FtsZ ring formation. Inhibits FtsZ ring formation at polar sites. Interacts either with FtsZ or with one of its binding partners to promote depolymerization. The sequence is that of Septation ring formation regulator EzrA from Oceanobacillus iheyensis (strain DSM 14371 / CIP 107618 / JCM 11309 / KCTC 3954 / HTE831).